The following is a 566-amino-acid chain: MAPLLAAAMNHAAAHPGLRSHLVGPNNESFSRHHLPSSSPQSSKRRCNLSFTTRSARVGSQNGVQMLSPSEIPQRDWFPSDFTFGAATSAYQIEGAWNEDGKGESNWDHFCHNHPERILDGSNSDIGANSYHMYKTDVRLLKEMGMDAYRFSISWPRILPKGTKEGGINPDGIKYYRNLINLLLENGIEPYVTIFHWDVPQALEEKYGGFLDKSHKSIVEDYTYFAKVCFDNFGDKVKNWLTFNEPQTFTSFSYGTGVFAPGRCSPGLDCAYPTGNSLVEPYTAGHNILLAHAEAVDLYNKHYKRDDTRIGLAFDVMGRVPYGTSFLDKQAEERSWDINLGWFLEPVVRGDYPFSMRSLARERLPFFKDEQKEKLAGSYNMLGLNYYTSRFSKNIDISPNYSPVLNTDDAYASQEVNGPDGKPIGPPMGNPWIYMYPEGLKDLLMIMKNKYGNPPIYITENGIGDVDTKETPLPMEAALNDYKRLDYIQRHIATLKESIDLGSNVQGYFAWSLLDNFEWFAGFTERYGIVYVDRNNNCTRYMKESAKWLKEFNTAKKPSKKILTPA.

Residues methionine 1 to arginine 54 constitute a chloroplast transit peptide. Positions glycine 17–cysteine 47 are disordered. Residues glutamine 92, histidine 196, and asparagine 244 to glutamate 245 contribute to the a beta-D-glucoside site. Glutamate 245 functions as the Proton donor in the catalytic mechanism. A disulfide bond links cysteine 264 and cysteine 270. The tract at residues serine 325 to arginine 361 is dimerization. A beta-D-glucoside is bound at residue tyrosine 387. Dimerization regions lie at residues asparagine 394 to leucine 405 and lysine 450 to asparagine 453. A beta-D-glucoside contacts are provided by residues glutamate 460, tryptophan 511, glutamate 518–tryptophan 519, and tyrosine 527. The active-site Nucleophile is the glutamate 460.

Belongs to the glycosyl hydrolase 1 family. In terms of assembly, homo- and heterodimer. In terms of tissue distribution, expressed in all seedling parts. Most abundant in the coleoptile.

It is found in the plastid. It localises to the chloroplast. It catalyses the reaction Hydrolysis of terminal, non-reducing beta-D-glucosyl residues with release of beta-D-glucose.. The enzyme catalyses DIMBOA beta-D-glucoside + H2O = DIMBOA + D-glucose. The catalysed reaction is DIBOA beta-D-glucoside + H2O = DIBOA + D-glucose. Its activity is regulated as follows. Reversibly inhibited by micromolar concentrations of Hg(2+) or Ag(+), but irreversibly inhibited by alkylation in presence of urea. Competitive inhibition by p-nitrophenyl beta-D-thioglucoside (pNPTGlc), glucotetrazole, and para-hydroxy-S-mandelonitrile beta-glucoside (dhurrin). In terms of biological role, is implicated in many functions such as ABA metabolism, hydrolysis of conjugated gibberellins, conversion of storage forms of cytokinins to active forms. Also acts in defense of young plant parts against pests via the production of hydroxamic acids from hydroxamic acid glucosides. Enzymatic activity is highly correlated with plant growth. The preferred substrate is DIMBOA-beta-D-glucoside. Hydrolyzes the chromogenic substrate 6-bromo-2-naphthyl-beta-D-glucoside (6BNGlc) and various artificial aryl beta-glucosides. No activity with cellobiose, arbutin, gentiobiose, linamarin or dhurrin as substrates. This chain is 4-hydroxy-7-methoxy-3-oxo-3,4-dihydro-2H-1,4-benzoxazin-2-yl glucoside beta-D-glucosidase 1, chloroplastic (GLU1), found in Zea mays (Maize).